The following is a 264-amino-acid chain: uncharacterized protein (264 aa).

Positions 1–26 (MMKKLFHSTLIVLLFFSFFGVQPIHA) are cleaved as a signal peptide.

This is an uncharacterized protein from Bacillus subtilis (strain 168).